A 567-amino-acid polypeptide reads, in one-letter code: Fanconi anemia group C protein homolog (567 aa).

In terms of assembly, belongs to the multisubunit FA complex composed of FANCA, FANCB, FANCC, FANCE, FANCF, FANCG, FANCL/PHF9 and FANCM. This complex may also include HSP70. Interacts with ZBTB32. Upon IFNG induction, interacts with STAT1. Interacts with CDK1. Interacts with EIF2AK2.

Its subcellular location is the nucleus. The protein localises to the cytoplasm. Functionally, DNA repair protein that may operate in a postreplication repair or a cell cycle checkpoint function. May be implicated in interstrand DNA cross-link repair and in the maintenance of normal chromosome stability. Upon IFNG induction, may facilitate STAT1 activation by recruiting STAT1 to IFNGR1. The sequence is that of Fanconi anemia group C protein homolog (FANCC) from Bos taurus (Bovine).